Consider the following 594-residue polypeptide: CTP synthase (594 aa).

The interval M1–L272 is amidoligase domain. S18 contacts CTP. Position 18 (S18) interacts with UTP. S19–I24 contributes to the ATP binding site. Y59 is a binding site for L-glutamine. D76 provides a ligand contact to ATP. Mg(2+)-binding residues include D76 and E146. CTP-binding positions include D153–E155, K193–Q198, and K229. Residues K193–Q198 and K229 contribute to the UTP site. Residues T299–V543 form the Glutamine amidotransferase type-1 domain. G363 serves as a coordination point for L-glutamine. The active-site Nucleophile; for glutamine hydrolysis is C390. L-glutamine contacts are provided by residues L391 to Q394, E414, and R471. Residues H516 and E518 contribute to the active site. Residues A562–E571 are compositionally biased toward low complexity. Residues A562 to Q594 are disordered. Residues G584 to Q594 are compositionally biased toward basic and acidic residues.

Belongs to the CTP synthase family. Homotetramer.

It carries out the reaction UTP + L-glutamine + ATP + H2O = CTP + L-glutamate + ADP + phosphate + 2 H(+). The catalysed reaction is L-glutamine + H2O = L-glutamate + NH4(+). The enzyme catalyses UTP + NH4(+) + ATP = CTP + ADP + phosphate + 2 H(+). The protein operates within pyrimidine metabolism; CTP biosynthesis via de novo pathway; CTP from UDP: step 2/2. Allosterically activated by GTP, when glutamine is the substrate; GTP has no effect on the reaction when ammonia is the substrate. The allosteric effector GTP functions by stabilizing the protein conformation that binds the tetrahedral intermediate(s) formed during glutamine hydrolysis. Inhibited by the product CTP, via allosteric rather than competitive inhibition. Functionally, catalyzes the ATP-dependent amination of UTP to CTP with either L-glutamine or ammonia as the source of nitrogen. Regulates intracellular CTP levels through interactions with the four ribonucleotide triphosphates. This Chlorobium phaeovibrioides (strain DSM 265 / 1930) (Prosthecochloris vibrioformis (strain DSM 265)) protein is CTP synthase.